The primary structure comprises 523 residues: DNA-directed RNA polymerase subunit Rpo2N (523 aa).

Positions 501–523 are disordered; the sequence is SSMGVEGIPGISMETTSTTSADD. Residues 513–523 show a composition bias toward polar residues; sequence METTSTTSADD.

It belongs to the RNA polymerase beta chain family. In terms of assembly, part of the RNA polymerase complex.

It is found in the cytoplasm. It catalyses the reaction RNA(n) + a ribonucleoside 5'-triphosphate = RNA(n+1) + diphosphate. Functionally, DNA-dependent RNA polymerase (RNAP) catalyzes the transcription of DNA into RNA using the four ribonucleoside triphosphates as substrates. The Rpo2 subunit (Rpo2N and Rpo2C in this organism) is implicated in DNA promoter recognition and in nucleotide binding. In Halobacterium salinarum (strain ATCC 29341 / DSM 671 / R1), this protein is DNA-directed RNA polymerase subunit Rpo2N.